The following is a 574-amino-acid chain: Secreted lipase 1 (574 aa).

The first 17 residues, 1–17 (MKLSLVPIFALLSTAFA), serve as a signal peptide directing secretion. The cysteines at positions 95 and 132 are disulfide-linked. The active-site Acyl-ester intermediate is the Ser244. Cys303 and Cys312 form a disulfide bridge. Asn323 is a glycosylation site (N-linked (GlcNAc...) asparagine). Residue Glu376 is the Charge relay system of the active site. Asn386 carries an N-linked (GlcNAc...) asparagine glycan. The active-site Charge relay system is the His489. Asn524 carries N-linked (GlcNAc...) asparagine glycosylation.

This sequence belongs to the type-B carboxylesterase/lipase family.

It localises to the secreted. It catalyses the reaction a carboxylic ester + H2O = an alcohol + a carboxylate + H(+). Functionally, secreted lipase that allows the use of hydrolyzed lipids as carbon sources. Has highest activity with methyl umbelliferyl oleate (C18:1), whereas much lower activities are obtained with the respective esters of palmitate (C16:0) and stearate (C18:0) (24% and 12% of the activity obtained with umbelliferyl oleate, respectively). Hydrolyzes 1- and 3-positioned ester bonds in preference to 2-positioned ester bonds. The production rate of monoglycerides is lower than that of diacylglycerides. Seems not required for the penetration of intact host tissue. This chain is Secreted lipase 1, found in Botryotinia fuckeliana (strain B05.10) (Noble rot fungus).